Reading from the N-terminus, the 3013-residue chain is DmX-like protein 1 (3013 aa).

WD repeat units lie at residues 108–145 (FLDS…TEDE), 164–204 (KTAS…RPAV), and 227–275 (AHPR…NDCF). Phosphoserine occurs at positions 322, 420, 423, and 434. Residues 418–442 (PSSEASVEDSIQADLKSDEELDDGV) form a disordered region. A WD 4 repeat occupies 474 to 514 (DHQIEVLLSEWSKNADMLFSIHPMDGSLLVWHVDWLDEYQP). Ser572 carries the phosphoserine modification. WD repeat units lie at residues 578 to 619 (AHSK…ESAF) and 842 to 893 (KKRL…TPVS). Phosphoserine is present on residues Ser916 and Ser922. 3 WD repeats span residues 970 to 1008 (HLSS…GESA), 1145 to 1193 (EDGS…PLSK), and 1208 to 1248 (GAPP…EPVI). 4 positions are modified to phosphoserine: Ser1829, Ser1896, Ser1903, and Ser1965. Disordered regions lie at residues 2364-2406 (GQAN…PPAV) and 2431-2462 (QSRA…GLQL). Residues 2385–2398 (SKVSARESPVSSSS) are compositionally biased toward low complexity. The segment covering 2437 to 2455 (DSEESLESDDEEEEDDDDA) has biased composition (acidic residues). WD repeat units follow at residues 2728 to 2769 (KAIN…TCFR), 2771 to 2810 (GGNS…CPVT), 2822 to 2864 (CHNK…ANSL), 2870 to 2909 (CHDS…QRQL), 2912 to 2951 (SHDS…LLHT), and 2964 to 3002 (NIGT…SPLN).

The polypeptide is DmX-like protein 1 (Dmxl1) (Mus musculus (Mouse)).